We begin with the raw amino-acid sequence, 119 residues long: Integration host factor subunit beta (119 aa).

The segment at 93 to 119 (AGGLADTQPDGDAPDQPQPTLLGLHAM) is disordered. The span at 97–112 (ADTQPDGDAPDQPQPT) shows a compositional bias: low complexity.

The protein belongs to the bacterial histone-like protein family. In terms of assembly, heterodimer of an alpha and a beta chain.

Its function is as follows. This protein is one of the two subunits of integration host factor, a specific DNA-binding protein that functions in genetic recombination as well as in transcriptional and translational control. In Bordetella petrii (strain ATCC BAA-461 / DSM 12804 / CCUG 43448), this protein is Integration host factor subunit beta.